We begin with the raw amino-acid sequence, 81 residues long: Beta-catenin-interacting protein 1 (81 aa).

Residue Ser59 is modified to Phosphoserine.

Belongs to the CTNNBIP1 family. Binds CTNNB1.

Its subcellular location is the cytoplasm. It is found in the nucleus. In terms of biological role, prevents the interaction between CTNNB1 and TCF family members, and acts as a negative regulator of the Wnt signaling pathway. The sequence is that of Beta-catenin-interacting protein 1 (CTNNBIP1) from Homo sapiens (Human).